A 336-amino-acid polypeptide reads, in one-letter code: Holliday junction branch migration complex subunit RuvB (336 aa).

Positions 4 to 184 are large ATPase domain (RuvB-L); it reads ADRLISAGAT…FGIVQRLEFY (181 aa). Residues Ile23, Arg24, Gly65, Lys68, Thr69, Thr70, 131 to 133, Arg174, Tyr184, and Arg221 contribute to the ATP site; that span reads EDY. A Mg(2+)-binding site is contributed by Thr69. The segment at 185–255 is small ATPAse domain (RuvB-S); sequence QVPDLQHIVG…IAAQALDMLN (71 aa). Residues 258 to 336 form a head domain (RuvB-H) region; it reads AEGFDYMDRK…HFGITPPEMP (79 aa). DNA-binding residues include Arg294, Arg313, and Arg318.

The protein belongs to the RuvB family. In terms of assembly, homohexamer. Forms an RuvA(8)-RuvB(12)-Holliday junction (HJ) complex. HJ DNA is sandwiched between 2 RuvA tetramers; dsDNA enters through RuvA and exits via RuvB. An RuvB hexamer assembles on each DNA strand where it exits the tetramer. Each RuvB hexamer is contacted by two RuvA subunits (via domain III) on 2 adjacent RuvB subunits; this complex drives branch migration. In the full resolvosome a probable DNA-RuvA(4)-RuvB(12)-RuvC(2) complex forms which resolves the HJ.

The protein localises to the cytoplasm. The catalysed reaction is ATP + H2O = ADP + phosphate + H(+). Functionally, the RuvA-RuvB-RuvC complex processes Holliday junction (HJ) DNA during genetic recombination and DNA repair, while the RuvA-RuvB complex plays an important role in the rescue of blocked DNA replication forks via replication fork reversal (RFR). RuvA specifically binds to HJ cruciform DNA, conferring on it an open structure. The RuvB hexamer acts as an ATP-dependent pump, pulling dsDNA into and through the RuvAB complex. RuvB forms 2 homohexamers on either side of HJ DNA bound by 1 or 2 RuvA tetramers; 4 subunits per hexamer contact DNA at a time. Coordinated motions by a converter formed by DNA-disengaged RuvB subunits stimulates ATP hydrolysis and nucleotide exchange. Immobilization of the converter enables RuvB to convert the ATP-contained energy into a lever motion, pulling 2 nucleotides of DNA out of the RuvA tetramer per ATP hydrolyzed, thus driving DNA branch migration. The RuvB motors rotate together with the DNA substrate, which together with the progressing nucleotide cycle form the mechanistic basis for DNA recombination by continuous HJ branch migration. Branch migration allows RuvC to scan DNA until it finds its consensus sequence, where it cleaves and resolves cruciform DNA. In Salmonella arizonae (strain ATCC BAA-731 / CDC346-86 / RSK2980), this protein is Holliday junction branch migration complex subunit RuvB.